Here is a 135-residue protein sequence, read N- to C-terminus: Small ribosomal subunit protein uS9 (135 aa).

The segment covering 108 to 118 (VGDSRRTEPHK) has biased composition (basic and acidic residues). The tract at residues 108 to 135 (VGDSRRTEPHKPNRSTKGPRAKRQKSYR) is disordered. Positions 119–135 (PNRSTKGPRAKRQKSYR) are enriched in basic residues.

This sequence belongs to the universal ribosomal protein uS9 family. In terms of assembly, part of the 30S ribosomal subunit.

In Thermococcus kodakarensis (strain ATCC BAA-918 / JCM 12380 / KOD1) (Pyrococcus kodakaraensis (strain KOD1)), this protein is Small ribosomal subunit protein uS9.